The sequence spans 71 residues: Permeability factor 2 (71 aa).

Disulfide bonds link Cys7–Cys33 and Cys9–Cys49.

The protein belongs to the intercrine alpha (chemokine CxC) family. As to quaternary structure, homodimer.

Its subcellular location is the secreted. Has chemotactic activity for neutrophils. This Oryctolagus cuniculus (Rabbit) protein is Permeability factor 2.